Here is an 87-residue protein sequence, read N- to C-terminus: Small ribosomal subunit protein bS20 (87 aa).

It belongs to the bacterial ribosomal protein bS20 family.

In terms of biological role, binds directly to 16S ribosomal RNA. The sequence is that of Small ribosomal subunit protein bS20 from Brachyspira hyodysenteriae (strain ATCC 49526 / WA1).